The following is a 517-amino-acid chain: DNA relaxase MbeA (517 aa).

Tyrosine 19 acts as the O-(5'-phospho-DNA)-tyrosine intermediate in catalysis. The a divalent metal cation site is built by histidine 97, glutamate 104, and asparagine 106. Disordered stretches follow at residues 281–310 (YSPV…QEGR), 380–405 (PSVR…VTQS), and 496–517 (SLER…SLGW). A compositionally biased stretch (basic and acidic residues) spans 297-310 (GRGERGDDAAQEGR). Basic and acidic residues predominate over residues 496 to 510 (SLERERQPEIQERTL).

It to E.coli MbaA and MbkA. In terms of assembly, interacts with MbeB and MbeC to form the relaxosome. Requires Mn(2+) as cofactor. Co(2+) is required as a cofactor. The cofactor is Ni(2+).

The catalysed reaction is ATP-independent breakage of single-stranded DNA, followed by passage and rejoining.. In terms of biological role, relaxase involved in plasmid ColE1 conjugative mobilization and is thus essential to promote the specific transfer of the plasmid during conjugation. First catalyzes the specific cleavage of one of the DNA strands at oriT, forming a covalent 5'-phosphotyrosine intermediate. The nic site corresponds to 5'-(1469)CTGG/CTTA(1462)-3' in the cleaved strand. The cleaved strand is then transferred through the dedicated type IV secretion apparatus. MbeA remains covalently linked at the 5' end of the strand, and once in the recipient cell, it probably catalyzes the rejoining of the two ends of the strand, re-forming the circular plasmid DNA. Is functional in vitro without a requirement for the conjugative accessory proteins. The chain is DNA relaxase MbeA (mbeA) from Escherichia coli.